Here is a 356-residue protein sequence, read N- to C-terminus: 11-beta-hydroxysteroid dehydrogenase (356 aa).

The chain crosses the membrane as a helical; Signal-anchor for type II membrane protein span at residues Leu-10–Phe-30. The short motif at Pro-13 to Ser-26 is the Proline-knob element. Residue Gly-54–Arg-85 participates in NADP(+) binding. Ser-184 serves as a coordination point for substrate. Residue Tyr-197 is the Proton acceptor of the active site. NADP(+) is bound by residues Tyr-197 to Lys-201 and Lys-201.

This sequence belongs to the short-chain dehydrogenases/reductases (SDR) family. Expressed in megagametophytes (at protein level).

It is found in the lipid droplet. The protein localises to the membrane. The enzyme catalyses an 11beta-hydroxysteroid + NADP(+) = an 11-oxosteroid + NADPH + H(+). It carries out the reaction corticosterone + NADP(+) = 11-dehydrocorticosterone + NADPH + H(+). It catalyses the reaction 17beta-estradiol + NADP(+) = estrone + NADPH + H(+). Has dehydrogenase activity against corticosterone (11 beta-hydroxysteroid) and estradiol (17 beta-hydroxysteroid) in the presence of NADP(+). May be involved in signal transduction regulated by various sterols. The chain is 11-beta-hydroxysteroid dehydrogenase from Pinus massoniana (Chinese red pine).